The sequence spans 355 residues: S-adenosylmethionine:tRNA ribosyltransferase-isomerase (355 aa).

The protein belongs to the QueA family. Monomer.

Its subcellular location is the cytoplasm. It carries out the reaction 7-aminomethyl-7-carbaguanosine(34) in tRNA + S-adenosyl-L-methionine = epoxyqueuosine(34) in tRNA + adenine + L-methionine + 2 H(+). Its pathway is tRNA modification; tRNA-queuosine biosynthesis. Its function is as follows. Transfers and isomerizes the ribose moiety from AdoMet to the 7-aminomethyl group of 7-deazaguanine (preQ1-tRNA) to give epoxyqueuosine (oQ-tRNA). This Erwinia tasmaniensis (strain DSM 17950 / CFBP 7177 / CIP 109463 / NCPPB 4357 / Et1/99) protein is S-adenosylmethionine:tRNA ribosyltransferase-isomerase.